The chain runs to 300 residues: Ornithine carbamoyltransferase (300 aa).

Residues 49–52 (STRT), Gln76, Arg100, and 127–130 (HPCQ) contribute to the carbamoyl phosphate site. L-ornithine-binding positions include Asn158, Asp218, and 222–223 (SM). Residues 258–259 (CL) and Arg286 each bind carbamoyl phosphate.

It belongs to the aspartate/ornithine carbamoyltransferase superfamily. OTCase family.

The protein localises to the cytoplasm. The enzyme catalyses carbamoyl phosphate + L-ornithine = L-citrulline + phosphate + H(+). The protein operates within amino-acid biosynthesis; L-arginine biosynthesis; L-arginine from L-ornithine and carbamoyl phosphate: step 1/3. Its function is as follows. Reversibly catalyzes the transfer of the carbamoyl group from carbamoyl phosphate (CP) to the N(epsilon) atom of ornithine (ORN) to produce L-citrulline. The chain is Ornithine carbamoyltransferase from Nitratidesulfovibrio vulgaris (strain ATCC 29579 / DSM 644 / CCUG 34227 / NCIMB 8303 / VKM B-1760 / Hildenborough) (Desulfovibrio vulgaris).